The chain runs to 399 residues: Protein HYM1 (399 aa).

The segment covering 363-382 has biased composition (low complexity); that stretch reads VSNNNASSSNVASITSPSSV. Residues 363-399 form a disordered region; sequence VSNNNASSSNVASITSPSSVMNNQSSILTHSTSPDSR. Over residues 383 to 399 the composition is skewed to polar residues; sequence MNNQSSILTHSTSPDSR.

It belongs to the Mo25 family.

This Saccharomyces cerevisiae (strain ATCC 204508 / S288c) (Baker's yeast) protein is Protein HYM1 (HYM1).